The primary structure comprises 504 residues: Anaerobic nitric oxide reductase transcription regulator NorR (504 aa).

A 4-aspartylphosphate modification is found at aspartate 57. Residues 187 to 416 (MIGLSPGMTQ…LEHAIHRAVV (230 aa)) enclose the Sigma-54 factor interaction domain. Residues 215-222 (GETGTGKE) and 278-287 (ADNGTLFLDE) each bind ATP. The segment at residues 479–498 (WAACARMLETDVANLHRLAK) is a DNA-binding region (H-T-H motif).

The protein operates within nitrogen metabolism; nitric oxide reduction. Required for the expression of anaerobic nitric oxide (NO) reductase, acts as a transcriptional activator for at least the norVW operon. Activation also requires sigma-54. This Escherichia coli O127:H6 (strain E2348/69 / EPEC) protein is Anaerobic nitric oxide reductase transcription regulator NorR.